A 160-amino-acid chain; its full sequence is Transcription elongation factor GreA (160 aa).

Residues 10–37 are a coiled coil; sequence TLDGKAKLENELQELKTVKRKEVVERIK.

This sequence belongs to the GreA/GreB family.

In terms of biological role, necessary for efficient RNA polymerase transcription elongation past template-encoded arresting sites. The arresting sites in DNA have the property of trapping a certain fraction of elongating RNA polymerases that pass through, resulting in locked ternary complexes. Cleavage of the nascent transcript by cleavage factors such as GreA or GreB allows the resumption of elongation from the new 3'terminus. GreA releases sequences of 2 to 3 nucleotides. The protein is Transcription elongation factor GreA of Listeria innocua serovar 6a (strain ATCC BAA-680 / CLIP 11262).